The following is a 157-amino-acid chain: Cytochrome b6-f complex subunit 4 (157 aa).

The next 3 helical transmembrane spans lie at 35–55 (ILYI…GLGV), 94–114 (LVGV…AFIE), and 130–150 (LVYL…VLGI).

This sequence belongs to the cytochrome b family. PetD subfamily. As to quaternary structure, the 4 large subunits of the cytochrome b6-f complex are cytochrome b6, subunit IV (17 kDa polypeptide, petD), cytochrome f and the Rieske protein, while the 4 small subunits are petG, petL, petM and petN. The complex functions as a dimer.

The protein resides in the plastid. It localises to the chloroplast thylakoid membrane. Functionally, component of the cytochrome b6-f complex, which mediates electron transfer between photosystem II (PSII) and photosystem I (PSI), cyclic electron flow around PSI, and state transitions. In Amphidinium carterae (Dinoflagellate), this protein is Cytochrome b6-f complex subunit 4.